The following is a 439-amino-acid chain: Proline--tRNA ligase (439 aa).

Belongs to the class-II aminoacyl-tRNA synthetase family. ProS type 2 subfamily. Homodimer.

It is found in the cytoplasm. It catalyses the reaction tRNA(Pro) + L-proline + ATP = L-prolyl-tRNA(Pro) + AMP + diphosphate. In terms of biological role, catalyzes the attachment of proline to tRNA(Pro) in a two-step reaction: proline is first activated by ATP to form Pro-AMP and then transferred to the acceptor end of tRNA(Pro). The sequence is that of Proline--tRNA ligase from Phenylobacterium zucineum (strain HLK1).